Here is a 235-residue protein sequence, read N- to C-terminus: Exotoxin type C (235 aa).

An N-terminal signal peptide occupies residues 1 to 27 (MKKINIIKIVFIITVILISTISPIIKS). Positions 194, 228, and 230 each coordinate Zn(2+).

Belongs to the staphylococcal/streptococcal toxin family.

Its function is as follows. Superantigen that acts as a causative agent of the symptoms associated with scarlet fever. Has been associated with streptococcal toxic shock-like disease and may play a role in the early events of rheumatic fever. Superantigens cross-link major histocompatibility complex (MHC) class II and T-cell receptor (TCR) molecules, resulting in an overstimulation of T-cells associated with a massive release of pyrogenic and inflammatory cytokines. This is Exotoxin type C from Streptococcus pyogenes serotype M18 (strain MGAS8232).